We begin with the raw amino-acid sequence, 337 residues long: Mannan polymerase complex subunit mnn9 (337 aa).

Residues 1 to 8 (MRVYNKSR) are Cytoplasmic-facing. A helical; Signal-anchor for type II membrane protein membrane pass occupies residues 9–29 (IVGQLLFVALGITFIYYLFTP). The Lumenal portion of the chain corresponds to 30–337 (SVNSNAKVQI…PYYLVFHHNE (308 aa)).

It belongs to the ANP1/MMN9/VAN1 family.

The protein resides in the endoplasmic reticulum membrane. Its subcellular location is the golgi apparatus membrane. Its pathway is protein modification; protein glycosylation. Required for the addition of the long alpha 1,6-mannose backbone of N-linked glycans on cell wall and periplasmic proteins. The protein is Mannan polymerase complex subunit mnn9 of Schizosaccharomyces pombe (strain 972 / ATCC 24843) (Fission yeast).